Here is a 420-residue protein sequence, read N- to C-terminus: Ammonium transporter Amt2 (420 aa).

The next 11 helical transmembrane spans lie at 34–54, 71–91, 120–140, 149–169, 180–200, 220–240, 250–270, 273–293, 295–315, 339–359, and 365–385; these read VFFLVVMGVLVFMMQWGFAML, NMVDWLIGCVAWLFIGGILCS, SWFFGLVFCATAATIVSGGVA, VLISLIITGLLYPLFVYLGPW, AGSLVVHGLGGFLALGAIAAL, IPMAVFGAFALAIGWYGFNVG, GLVCATTTMAMAGGGIGALIA, NDVLFTANGIVAGLVAICSGT, VVSPIGGLIIGLIAGLQVPIV, VIGAILTGILGLKIFGGAGGV, and IIGAVFCIIYGTGLGYILAKI.

Belongs to the ammonia transporter channel (TC 1.A.11.2) family. In terms of assembly, homotrimer. Interacts and forms a complex with GlnK2.

The protein resides in the cell membrane. In terms of biological role, involved in the uptake of ammonium/ammonia (NH(4)(+)/NH(3)). Transport is electrogenic. This chain is Ammonium transporter Amt2, found in Methanocaldococcus jannaschii (strain ATCC 43067 / DSM 2661 / JAL-1 / JCM 10045 / NBRC 100440) (Methanococcus jannaschii).